The chain runs to 509 residues: Lengsin (509 aa).

The segment at 1 to 34 (MNNEEDLLQEDSTRDEGNETEANSMNTLRRTRKK) is disordered. One can recognise a GS beta-grasp domain in the interval 83–177 (NRLQFVRFEA…VICDTFTVTG (95 aa)). The 326-residue stretch at 184–509 (PRYIAKRQLS…ERNKFLEYFI (326 aa)) folds into the GS catalytic domain.

This sequence belongs to the glutamine synthetase family. Dodecamer. Interacts with BFSP2 and VIM. In terms of tissue distribution, abundantly expressed in lens.

Functionally, may act as a component of the cytoskeleton or as a chaperone for the reorganization of intermediate filament proteins during terminal differentiation in the lens. Does not seem to have enzymatic activity. This Homo sapiens (Human) protein is Lengsin (LGSN).